The sequence spans 249 residues: Tumor necrosis factor receptor superfamily member 13B (249 aa).

At 1 to 128 the chain is on the extracellular side; it reads MAMAFCPKDQ…LSSDQLTLYC (128 aa). TNFR-Cys repeat units lie at residues 5 to 38 and 42 to 76; these read FCPKDQYWDSSRKSCVSCALTCSQRSQRTCTDFC and NCRKEQGRYYDHLLGACVSCDSTCTQHPQQCAHFC. Cystine bridges form between Cys6/Cys19, Cys22/Cys34, Cys26/Cys38, Cys43/Cys58, Cys61/Cys72, and Cys65/Cys76. The segment at 86-116 is disordered; the sequence is LQPELGRPQAGEVEVRSDNSGRHQGSEHGPG. Residues 98 to 111 are compositionally biased toward basic and acidic residues; the sequence is VEVRSDNSGRHQGS. The helical; Signal-anchor for type III membrane protein transmembrane segment at 129–149 threads the bilayer; it reads TLGVCLCAIFCCFLVALASFL. At 150–249 the chain is on the cytoplasmic side; it reads RRRGEPLPSQ…ASTGDARPAT (100 aa). The disordered stretch occupies residues 156 to 176; it reads LPSQPAGPRGSQANSPHAHRP.

In terms of assembly, binds TRAF2, TRAF5 and TRAF6. Binds the NH2-terminal domain of CAMLG with its C-terminus.

It is found in the membrane. Receptor for TNFSF13/APRIL and TNFSF13B/TALL1/BAFF/BLYS that binds both ligands with similar high affinity. Mediates calcineurin-dependent activation of NF-AT, as well as activation of NF-kappa-B and AP-1. Involved in the stimulation of B- and T-cell function and the regulation of humoral immunity. This Mus musculus (Mouse) protein is Tumor necrosis factor receptor superfamily member 13B (Tnfrsf13b).